Here is a 307-residue protein sequence, read N- to C-terminus: Reaction center protein M chain (307 aa).

The next 3 membrane-spanning stretches (helical) occupy residues L52–A78, Q110–L139, and G142–M167. Residues H181 and H201 each coordinate (7R,8Z)-bacteriochlorophyll b. Residues Y197–V225 form a helical membrane-spanning segment. Fe cation contacts are provided by H218 and E233. An a ubiquinone-binding site is contributed by W251. A helical membrane pass occupies residues A259–L285. H265 contributes to the Fe cation binding site.

This sequence belongs to the reaction center PufL/M/PsbA/D family. Reaction center is composed of four bacteriochlorophylls, two bacteriopheophytins, two ubiquinones, one iron, and three highly hydrophobic polypeptide chains (designated L, M, and H).

It is found in the cellular chromatophore membrane. In terms of biological role, the reaction center is a membrane-bound complex that mediates the initial photochemical event in the electron transfer process of photosynthesis. In Rhodobacter capsulatus (Rhodopseudomonas capsulata), this protein is Reaction center protein M chain (pufM).